The following is a 353-amino-acid chain: 26S proteasome non-ATPase regulatory subunit 8 (353 aa).

Residues 1 to 25 are disordered; that stretch reads MFIKGRAAKTPRGEPRRSSRGGRKL. A PCI domain is found at 165-334; sequence PSFERYMAQL…QQKPEDSTIP (170 aa). Residue K300 forms a Glycyl lysine isopeptide (Lys-Gly) (interchain with G-Cter in SUMO2) linkage.

This sequence belongs to the proteasome subunit S14 family. As to quaternary structure, component of the 19S proteasome regulatory particle complex. The 26S proteasome consists of a 20S core particle (CP) and two 19S regulatory subunits (RP). The regulatory particle is made of a lid composed of 9 subunits including PSMD8, a base containing 6 ATPases and few additional components. Interacts with DDI2. Interacts with TASOR. Expressed in the Sertoli cells of the testis.

Functionally, component of the 26S proteasome, a multiprotein complex involved in the ATP-dependent degradation of ubiquitinated proteins. This complex plays a key role in the maintenance of protein homeostasis by removing misfolded or damaged proteins, which could impair cellular functions, and by removing proteins whose functions are no longer required. Therefore, the proteasome participates in numerous cellular processes, including cell cycle progression, apoptosis, or DNA damage repair. In Mus musculus (Mouse), this protein is 26S proteasome non-ATPase regulatory subunit 8 (Psmd8).